Here is a 106-residue protein sequence, read N- to C-terminus: Immunoglobulin lambda constant 2 (106 aa).

An Ig-like domain is found at 7-101 (PSVTLFPPSS…EGSTVEKTVA (95 aa)). Cysteines 28 and 87 form a disulfide.

As to quaternary structure, immunoglobulins are composed of two identical heavy chains and two identical light chains; disulfide-linked.

It localises to the secreted. It is found in the cell membrane. In terms of biological role, constant region of immunoglobulin light chains. Immunoglobulins, also known as antibodies, are membrane-bound or secreted glycoproteins produced by B lymphocytes. In the recognition phase of humoral immunity, the membrane-bound immunoglobulins serve as receptors which, upon binding of a specific antigen, trigger the clonal expansion and differentiation of B lymphocytes into immunoglobulins-secreting plasma cells. Secreted immunoglobulins mediate the effector phase of humoral immunity, which results in the elimination of bound antigens. The antigen binding site is formed by the variable domain of one heavy chain, together with that of its associated light chain. Thus, each immunoglobulin has two antigen binding sites with remarkable affinity for a particular antigen. The variable domains are assembled by a process called V-(D)-J rearrangement and can then be subjected to somatic hypermutations which, after exposure to antigen and selection, allow affinity maturation for a particular antigen. The chain is Immunoglobulin lambda constant 2 from Homo sapiens (Human).